A 243-amino-acid chain; its full sequence is 4-phosphopantoate--beta-alanine ligase (243 aa).

Residues arginine 15, arginine 37, 176–178 (DLN), and 182–183 (RT) contribute to the ATP site.

It belongs to the archaeal phosphopantothenate synthetase family. Homodimer.

The catalysed reaction is (R)-4-phosphopantoate + beta-alanine + ATP = (R)-4'-phosphopantothenate + AMP + diphosphate + H(+). It participates in cofactor biosynthesis; coenzyme A biosynthesis. Functionally, catalyzes the condensation of (R)-4-phosphopantoate and beta-alanine to 4'-phosphopantothenate in the CoA biosynthesis pathway. The protein is 4-phosphopantoate--beta-alanine ligase of Methanospirillum hungatei JF-1 (strain ATCC 27890 / DSM 864 / NBRC 100397 / JF-1).